The following is a 357-amino-acid chain: MSQSGKNGLTYSDAGVDIDAGNLLVEKIKPAVRSTRRPGADGEIGGFGGLFDLKAAGFTDPVLVAANDGVGTKLKIAIDADYHDTVGIDLVAMCVNDLVVQGAEPLFFLDYFATGKLDPDQGAAIVGGIAAGCREAGCALIGGETAEMPGMYSDGDYDLAGFAVGAAERGQLLPSGDIAEGDVILGLASSGVHSNGFSLVRKIVDLSGLAWDAPAPFAEGKALGEALLTPTRIYVKPLLKAIRETHAIKALAHITGGGFPENIPRVLPKHLAAEIDLTAVKVPPVFSWLAKTGGVEAKEMLRTFNCGIGMIAVVAAENVDTVKAALEAEGESIVTLGRMIARDEGAAGTVYKGTLDL.

Belongs to the AIR synthase family.

It is found in the cytoplasm. It carries out the reaction 2-formamido-N(1)-(5-O-phospho-beta-D-ribosyl)acetamidine + ATP = 5-amino-1-(5-phospho-beta-D-ribosyl)imidazole + ADP + phosphate + H(+). It functions in the pathway purine metabolism; IMP biosynthesis via de novo pathway; 5-amino-1-(5-phospho-D-ribosyl)imidazole from N(2)-formyl-N(1)-(5-phospho-D-ribosyl)glycinamide: step 2/2. In Rhizobium rhizogenes (strain K84 / ATCC BAA-868) (Agrobacterium radiobacter), this protein is Phosphoribosylformylglycinamidine cyclo-ligase.